The chain runs to 125 residues: Histone H2A (125 aa).

Residues 1-18 are compositionally biased toward basic residues; the sequence is MSGRGKGGKVKAKAKSRS. Positions 1 to 21 are disordered; it reads MSGRGKGGKVKAKAKSRSSRA. S2 is modified (N-acetylserine). S2 is subject to Phosphoserine. K119 is covalently cross-linked (Glycyl lysine isopeptide (Lys-Gly) (interchain with G-Cter in ubiquitin)).

It belongs to the histone H2A family. The nucleosome is a histone octamer containing two molecules each of H2A, H2B, H3 and H4 assembled in one H3-H4 heterotetramer and two H2A-H2B heterodimers. The octamer wraps approximately 147 bp of DNA. In terms of processing, monoubiquitination of Lys-119 gives a specific tag for epigenetic transcriptional repression. Post-translationally, phosphorylation on Ser-2 is enhanced during mitosis. Phosphorylation on Ser-2 directly represses transcription.

The protein resides in the nucleus. It localises to the chromosome. In terms of biological role, core component of nucleosome. Nucleosomes wrap and compact DNA into chromatin, limiting DNA accessibility to the cellular machineries which require DNA as a template. Histones thereby play a central role in transcription regulation, DNA repair, DNA replication and chromosomal stability. DNA accessibility is regulated via a complex set of post-translational modifications of histones, also called histone code, and nucleosome remodeling. The chain is Histone H2A from Chironomus thummi thummi (Midge).